The following is a 68-amino-acid chain: Large ribosomal subunit protein bL32 (68 aa).

The disordered stretch occupies residues Met1–Gly25.

It belongs to the bacterial ribosomal protein bL32 family.

The chain is Large ribosomal subunit protein bL32 from Dinoroseobacter shibae (strain DSM 16493 / NCIMB 14021 / DFL 12).